We begin with the raw amino-acid sequence, 217 residues long: 3,4-dihydroxy-2-butanone 4-phosphate synthase (217 aa).

D-ribulose 5-phosphate-binding positions include 37–38 (RE), aspartate 42, 150–154 (RRGHT), and glutamate 174. Position 38 (glutamate 38) interacts with Mg(2+). Residue histidine 153 participates in Mg(2+) binding.

This sequence belongs to the DHBP synthase family. As to quaternary structure, homodimer. The cofactor is Mg(2+). Mn(2+) is required as a cofactor.

It catalyses the reaction D-ribulose 5-phosphate = (2S)-2-hydroxy-3-oxobutyl phosphate + formate + H(+). It functions in the pathway cofactor biosynthesis; riboflavin biosynthesis; 2-hydroxy-3-oxobutyl phosphate from D-ribulose 5-phosphate: step 1/1. Catalyzes the conversion of D-ribulose 5-phosphate to formate and 3,4-dihydroxy-2-butanone 4-phosphate. This chain is 3,4-dihydroxy-2-butanone 4-phosphate synthase, found in Shewanella oneidensis (strain ATCC 700550 / JCM 31522 / CIP 106686 / LMG 19005 / NCIMB 14063 / MR-1).